The following is a 1844-amino-acid chain: ATPase family AAA domain-containing protein 5 (1844 aa).

The residue at position 44 (S44) is a Phosphoserine. Residue K127 forms a Glycyl lysine isopeptide (Lys-Gly) (interchain with G-Cter in SUMO2) linkage. Over residues 178-199 the composition is skewed to polar residues; it reads QPNTMTSLQNSKKVNPKQGTTK. Positions 178–204 are disordered; that stretch reads QPNTMTSLQNSKKVNPKQGTTKNDFKK. Phosphoserine occurs at positions 219, 306, 311, 354, and 369. The segment at 368 to 384 is interaction with WDR48; sequence KSNVVIQEEELELAVLE. Disordered stretches follow at residues 477–499, 580–623, and 658–700; these read KLKK…REGN, ESEA…NSQL, and KFTR…SKNI. 2 stretches are compositionally biased toward polar residues: residues 580–592 and 599–608; these read ESEA…STPK and RISSTPTTET. Residues S602, S614, and S621 each carry the phosphoserine modification. Basic residues predominate over residues 664–673; it reads TPKKSKKKSN. Residues 685-700 are compositionally biased toward polar residues; it reads GFTSQIRKASNTSKNI. S817 carries the post-translational modification Phosphoserine. Basic and acidic residues-rich tracts occupy residues 987–1032 and 1092–1106; these read LEAD…ELSK and RQNL…HEDF. Disordered stretches follow at residues 987–1047 and 1092–1118; these read LEAD…SKDS and RQNL…SSDD. The residue at position 1116 (S1116) is a Phosphoserine. Residue 1132–1139 coordinates ATP; that stretch reads GPTGVGKT. Disordered regions lie at residues 1203-1235 and 1272-1292; these read KKIS…LPPK and ITQT…GAEE. Positions 1272-1285 are enriched in polar residues; sequence ITQTKSTNATNSNV. The LXCXE motif signature appears at 1428–1432; it reads LVCSE. Positions 1591–1635 are disordered; that stretch reads SLSSVSSSSNAEESKTGDEESKARDKGNNPETKKSIPCPPKTTAG. Over residues 1602–1624 the composition is skewed to basic and acidic residues; the sequence is EESKTGDEESKARDKGNNPETKK. Positions 1630-1719 are interaction with RAD51 and RFC5; it reads PKTTAGKKCS…AAAEALSFTK (90 aa).

It belongs to the AAA ATPase family. In terms of assembly, component of a heteropentameric replication factor ATAD5 RFC-like complex composed of one large subunit (ATAD5) and four small subunits (RFC2, RFC3, RFC4 and RFC5). Within the ATAD5 RFC-like complex, interacts with RFC2, RFC4 and RFC5. Within the ATAD5 RFC-like complex, interacts directly via-N terminal with RAD51; the interactions is enhanced under replication stress. Interacts with RB1 predominantly in G1 phase via its LXCXE motif. Interacts with RAD9A in growing cells. The interaction with RAD9A is reduced after exposure to DNA replication-inhibiting agents. Interacts with BRD4. Interacts with PCNA. Interacts with deubiquitinating enzyme USP1, and its associated factor, WDR48. ATR may stimulate the RAD9A dissociation.

It localises to the nucleus. Has an important role in DNA replication and in maintaining genome integrity during replication stress. Involved in a RAD9A-related damage checkpoint, a pathway that is important in determining whether DNA damage is compatible with cell survival or whether it requires cell elimination by apoptosis. Modulates the RAD9A interaction with BCL2 and thereby induces DNA damage-induced apoptosis. Promotes PCNA deubiquitination by recruiting the ubiquitin-specific protease 1 (USP1) and WDR48 thereby down-regulating the error-prone damage bypass pathway. As component of the ATAD5 RFC-like complex, regulates the function of the DNA polymerase processivity factor PCNA by unloading the ring-shaped PCNA homotrimer from DNA after replication during the S phase of the cell cycle. This seems to be dependent on its ATPase activity. Plays important roles in restarting stalled replication forks under replication stress, by unloading the PCNA homotrimer from DNA and recruiting RAD51 possibly through an ATR-dependent manner. Ultimately this enables replication fork regression, breakage, and eventual fork restart. Both the PCNA unloading activity and the interaction with WDR48 are required to efficiently recruit RAD51 to stalled replication forks. Promotes the generation of MUS81-mediated single-stranded DNA-associated breaks in response to replication stress, which is an alternative pathway to restart stalled/regressed replication forks. The polypeptide is ATPase family AAA domain-containing protein 5 (Homo sapiens (Human)).